The primary structure comprises 155 residues: MAGIDEIDEVIVRELRKNSRITLTELGRKVGLTASAVKNRIEKLEKLGVIKGYSAVVDPSFFGEFLTAVIEIELIDPDSPDLPRILTPILKMRNISDVYKKTGEFHLVIRGTFRDVESLNTFLKDLKRNYLRNLARRTRISIVLENFKEAGVTLK.

The HTH asnC-type domain occupies 4–65; the sequence is IDEIDEVIVR…VVDPSFFGEF (62 aa). Positions 23–42 form a DNA-binding region, H-T-H motif; the sequence is LTELGRKVGLTASAVKNRIE.

This is an uncharacterized protein from Pyrococcus horikoshii (strain ATCC 700860 / DSM 12428 / JCM 9974 / NBRC 100139 / OT-3).